The chain runs to 1040 residues: Beta-galactosidase (1040 aa).

Asn-111 and Asp-210 together coordinate substrate. Residue Asp-210 participates in Na(+) binding. Residues Glu-427, His-429, and Glu-472 each coordinate Mg(2+). Substrate is bound by residues Glu-472 and 548-551; that span reads EYAH. Glu-472 acts as the Proton donor in catalysis. The active-site Nucleophile is Glu-548. Asn-608 lines the Mg(2+) pocket. Phe-612 and Asp-615 together coordinate Na(+). Substrate is bound by residues Asp-615 and Trp-1016.

This sequence belongs to the glycosyl hydrolase 2 family. Homotetramer. It depends on Mg(2+) as a cofactor. Na(+) serves as cofactor.

It catalyses the reaction Hydrolysis of terminal non-reducing beta-D-galactose residues in beta-D-galactosides.. The sequence is that of Beta-galactosidase from Pectobacterium atrosepticum (strain SCRI 1043 / ATCC BAA-672) (Erwinia carotovora subsp. atroseptica).